We begin with the raw amino-acid sequence, 390 residues long: Ribosomal RNA large subunit methyltransferase G (390 aa).

This sequence belongs to the methyltransferase superfamily. RlmG family.

The protein resides in the cytoplasm. The catalysed reaction is guanosine(1835) in 23S rRNA + S-adenosyl-L-methionine = N(2)-methylguanosine(1835) in 23S rRNA + S-adenosyl-L-homocysteine + H(+). Functionally, specifically methylates the guanine in position 1835 (m2G1835) of 23S rRNA. The sequence is that of Ribosomal RNA large subunit methyltransferase G from Alcanivorax borkumensis (strain ATCC 700651 / DSM 11573 / NCIMB 13689 / SK2).